A 508-amino-acid polypeptide reads, in one-letter code: UTP--glucose-1-phosphate uridylyltransferase (508 aa).

At S13 the chain carries Phosphoserine. Residues 113 to 116, K127, Q190, and G222 each bind UTP; that span reads LNGG. 115–116 provides a ligand contact to substrate; it reads GG. K127 provides a ligand contact to Mg(2+). Substrate-binding positions include H223 and 251–253; that span reads NID. UTP contacts are provided by D253 and K396. A Mg(2+)-binding site is contributed by D253. The active site involves K396. T426 is subject to Phosphothreonine. S434 carries the post-translational modification Phosphoserine. K438 is subject to N6-acetyllysine. A phosphoserine mark is found at S448 and S461. The interval 457-508 is oligomerization; that stretch reads HLTVSGDVTFGKNVSLKGTVIIIANHGDRIDIPPGAVLENKIVSGNLRILDH. The interval 502–503 is critical for end-to-end subunit interaction; it reads NL.

Belongs to the UDPGP type 1 family. In terms of assembly, homooctamer.

It localises to the cytoplasm. The enzyme catalyses alpha-D-glucose 1-phosphate + UTP + H(+) = UDP-alpha-D-glucose + diphosphate. It participates in glycan biosynthesis; glycogen biosynthesis. In terms of biological role, UTP--glucose-1-phosphate uridylyltransferase catalyzing the conversion of glucose-1-phosphate into UDP-glucose, a crucial precursor for the production of glycogen. The chain is UTP--glucose-1-phosphate uridylyltransferase (UGP2) from Cricetulus griseus (Chinese hamster).